The chain runs to 398 residues: Beta-1,4-galactosyltransferase 1 (398 aa).

At 1 to 24 (MRLREPLLSGSAAMPGASLQRACR) the chain is on the cytoplasmic side. Residues 25-44 (LLVAVCALHLGVTLVYYLAG) traverse the membrane as a helical; Signal-anchor for type II membrane protein segment. Residues 45 to 398 (RDLSRLPQLV…QITVDIGTPS (354 aa)) lie on the Lumenal side of the membrane. The segment covering 61–76 (QGGSNSAAAIGQSSGE) has biased composition (polar residues). The tract at residues 61–117 (QGGSNSAAAIGQSSGELRTGGARPPPPLGASSQPRPGGDSSPVVDSGPGPASNLTSV) is disordered. N-linked (GlcNAc...) asparagine glycosylation is present at asparagine 113. Cysteines 130 and 172 form a disulfide. Residues 183 to 187 (PFRNR), 222 to 224 (FNR), 249 to 250 (VD), and tryptophan 310 contribute to the UDP-alpha-D-galactose site. A disulfide bridge connects residues cysteine 243 and cysteine 262. Aspartate 250 contributes to the Mn(2+) binding site. 312–315 (GEDD) contributes to the N-acetyl-D-glucosamine binding site. Histidine 343 is a binding site for Mn(2+). 343–346 (HSRD) contributes to the UDP-alpha-D-galactose binding site. Arginine 355 lines the N-acetyl-D-glucosamine pocket.

This sequence belongs to the glycosyltransferase 7 family. As to quaternary structure, homodimer; and heterodimer with alpha-lactalbumin to form lactose synthase. Interacts (via N-terminal cytoplasmic domain) with UBE2Q1 (via N-terminus); the interaction is direct. It depends on Mn(2+) as a cofactor. The soluble form derives from the membrane forms by proteolytic processing. Ubiquitously expressed, but at very low levels in fetal and adult brain.

It localises to the golgi apparatus. The protein localises to the golgi stack membrane. It is found in the cell membrane. Its subcellular location is the cell surface. The protein resides in the cell projection. It localises to the filopodium. The protein localises to the secreted. It carries out the reaction D-glucose + UDP-alpha-D-galactose = lactose + UDP + H(+). The enzyme catalyses an N-acetyl-beta-D-glucosaminyl derivative + UDP-alpha-D-galactose = a beta-D-galactosyl-(1-&gt;4)-N-acetyl-beta-D-glucosaminyl derivative + UDP + H(+). The catalysed reaction is N-acetyl-D-glucosamine + UDP-alpha-D-galactose = beta-D-galactosyl-(1-&gt;4)-N-acetyl-D-glucosamine + UDP + H(+). It catalyses the reaction a beta-D-GlcNAc-(1-&gt;3)-beta-D-Gal-(1-&gt;4)-beta-D-Glc-(1&lt;-&gt;1)-Cer(d18:1(4E)) + UDP-alpha-D-galactose = a neolactoside nLc4Cer(d18:1(4E)) + UDP + H(+). It carries out the reaction a beta-D-glucosylceramide + UDP-alpha-D-galactose = a beta-D-galactosyl-(1-&gt;4)-beta-D-glucosyl-(1&lt;-&gt;1)-ceramide + UDP + H(+). The enzyme catalyses a neolactoside IV(3)-beta-GlcNAc-nLc4Cer + UDP-alpha-D-galactose = a neolactoside nLc6Cer + UDP + H(+). The protein operates within protein modification; protein glycosylation. Its function is as follows. The Golgi complex form catalyzes the production of lactose in the lactating mammary gland and could also be responsible for the synthesis of complex-type N-linked oligosaccharides in many glycoproteins as well as the carbohydrate moieties of glycolipids. Functionally, the cell surface form functions as a recognition molecule during a variety of cell to cell and cell to matrix interactions, as those occurring during development and egg fertilization, by binding to specific oligosaccharide ligands on opposing cells or in the extracellular matrix. This chain is Beta-1,4-galactosyltransferase 1, found in Homo sapiens (Human).